Here is a 294-residue protein sequence, read N- to C-terminus: Cytidine deaminase (294 aa).

2 consecutive CMP/dCMP-type deaminase domains span residues 48 to 168 (DEDA…FGPK) and 186 to 294 (LTGD…VLLG). 89–91 (NME) provides a ligand contact to substrate. His102 contributes to the Zn(2+) binding site. Glu104 functions as the Proton donor in the catalytic mechanism. Zn(2+) is bound by residues Cys129 and Cys132.

This sequence belongs to the cytidine and deoxycytidylate deaminase family. Homodimer. The cofactor is Zn(2+).

It catalyses the reaction cytidine + H2O + H(+) = uridine + NH4(+). The enzyme catalyses 2'-deoxycytidine + H2O + H(+) = 2'-deoxyuridine + NH4(+). Functionally, this enzyme scavenges exogenous and endogenous cytidine and 2'-deoxycytidine for UMP synthesis. This Salmonella paratyphi A (strain ATCC 9150 / SARB42) protein is Cytidine deaminase.